A 402-amino-acid chain; its full sequence is MRENAMSTKKLPYKLSGSSKITTSIPNDLIILRNNCINSLNSSSSKADSITCIDTWLKYTEGLLTHRYEANNDAALIEEEIAIALINVAVFYQDIGIETLYRAYESSQASNNLWTTSGTYLKRGLGLICFLGKNFQINTANDCQKMQVLNVLNQLSLEFQLLQQLGIVVLALSKLRSKISKDAVADLEPQELEELGKSSVFYAKLCIGSYSTASQCQGGRIVDALFMNYLQSLTYLFLSINQYNNDECGIAIGMLQESIKKLLNIVPNSQLKELDILSSTDITKKRDLIKMSFKRKIHGSTLKNQRIFEKKVPFSSKAYMMPLLKSSLDDFVIPLTILLRYRYQTTNENYSFKTVETDVSKLKELFPRGKSSDIEGTVWSFQDGHLTFADSNNATHNCGNYF.

This is an uncharacterized protein from Saccharomyces cerevisiae (strain ATCC 204508 / S288c) (Baker's yeast).